Here is a 449-residue protein sequence, read N- to C-terminus: SUPPRESSOR OF GAMMA RESPONSE 1 (449 aa).

The region spanning 58–211 (LPRGVKFDPS…DYVVSKIFYQ (154 aa)) is the NAC domain. A DNA-binding region spans residues 167 to 217 (RGCKKIMVLYGGKAVKTNWVMHQYHLGIEEDEKEGDYVVSKIFYQQPQQLV). Residues 324–336 (DDKEEQEKDRDNE) are compositionally biased toward basic and acidic residues. Residues 324–348 (DDKEEQEKDRDNENQGEEDPTWFDS) form a disordered region.

In terms of processing, phosphorylated in a DNA stress-independent manner. Hyperphosphorylated on SQ motifs upon double-strand breaks, H(2)O(2) or zeocin treatments. Hyperphosphorylation is required for SOG1 function, and unlike constitutive phosphorylation, is ATM dependent. Expressed in shoot and root apical meristems, in lateral root primordia, in the vasculature of young leaves and in the root stele.

The protein localises to the nucleus. Transcription factor regulating the transcriptional activation response to gamma irradiation. Required for stem-cell death induced by UVB or by gamma irradiation. Not required for ATM activation, but participates in pathways governed by both ATM and ATR sensor kinases. Involved in DNA damage response (DDR) system that regulates cell cycle arrest. Functional homolog of animal p53. Regulates SMR5 and SMR7 transcription. Regulates DNA repair and cytokinin signaling separately and plays a key role in controlling lateral root formation under genotoxic stress. This chain is SUPPRESSOR OF GAMMA RESPONSE 1, found in Arabidopsis thaliana (Mouse-ear cress).